Consider the following 153-residue polypeptide: MADTERTFVMVKPDGVQRGLIGDIVSRFEDRGLKLVAGKFMQIDDELAREHYAEHVDKPFFDELKEFITSGPVFAMVWEGQDAVAQVRTMMGETDPAESAPGTIRGDFGLDLGRNVIHGSDTEPGSAEREIGLFFDDDELQDYERIDEPWLYE.

Lys12, Phe60, Arg88, Thr94, Arg105, and Asn115 together coordinate ATP. His118 serves as the catalytic Pros-phosphohistidine intermediate.

Belongs to the NDK family. Mg(2+) serves as cofactor.

It localises to the cytoplasm. It carries out the reaction a 2'-deoxyribonucleoside 5'-diphosphate + ATP = a 2'-deoxyribonucleoside 5'-triphosphate + ADP. It catalyses the reaction a ribonucleoside 5'-diphosphate + ATP = a ribonucleoside 5'-triphosphate + ADP. Its function is as follows. Major role in the synthesis of nucleoside triphosphates other than ATP. The ATP gamma phosphate is transferred to the NDP beta phosphate via a ping-pong mechanism, using a phosphorylated active-site intermediate. The chain is Nucleoside diphosphate kinase from Natronomonas pharaonis (strain ATCC 35678 / DSM 2160 / CIP 103997 / JCM 8858 / NBRC 14720 / NCIMB 2260 / Gabara) (Halobacterium pharaonis).